Consider the following 304-residue polypeptide: Glutaminase (304 aa).

Positions 63, 114, 158, 165, 189, 240, and 258 each coordinate substrate.

It belongs to the glutaminase family. As to quaternary structure, homotetramer.

It catalyses the reaction L-glutamine + H2O = L-glutamate + NH4(+). The protein is Glutaminase of Shewanella baltica (strain OS223).